Here is a 711-residue protein sequence, read N- to C-terminus: Polyribonucleotide nucleotidyltransferase (711 aa).

Residues Asp486 and Asp492 each coordinate Mg(2+). The 60-residue stretch at Pro553–Ile612 folds into the KH domain. The 69-residue stretch at Gly622–Lys690 folds into the S1 motif domain. Residues Ile689–Glu711 form a disordered region. Positions Glu694–Glu711 are enriched in low complexity.

The protein belongs to the polyribonucleotide nucleotidyltransferase family. In terms of assembly, component of the RNA degradosome, which is a multiprotein complex involved in RNA processing and mRNA degradation. Mg(2+) is required as a cofactor.

The protein resides in the cytoplasm. It carries out the reaction RNA(n+1) + phosphate = RNA(n) + a ribonucleoside 5'-diphosphate. Its function is as follows. Involved in mRNA degradation. Catalyzes the phosphorolysis of single-stranded polyribonucleotides processively in the 3'- to 5'-direction. In Escherichia coli (strain SE11), this protein is Polyribonucleotide nucleotidyltransferase.